A 290-amino-acid chain; its full sequence is UPF0761 membrane protein YihY (290 aa).

Transmembrane regions (helical) follow at residues 44 to 64 (LLSL…FPMF), 104 to 124 (VGAC…DSAL), 140 to 160 (FAVY…SLAI), 183 to 203 (IFPL…VPTI), 210 to 230 (AIVG…GFAL), and 244 to 264 (VLAV…IVLL).

Belongs to the UPF0761 family.

It localises to the cell inner membrane. The sequence is that of UPF0761 membrane protein YihY from Escherichia fergusonii (strain ATCC 35469 / DSM 13698 / CCUG 18766 / IAM 14443 / JCM 21226 / LMG 7866 / NBRC 102419 / NCTC 12128 / CDC 0568-73).